Reading from the N-terminus, the 299-residue chain is Regucalcin (299 aa).

Position 18 (glutamate 18) interacts with a divalent metal cation. The substrate site is built by arginine 101, asparagine 103, and glutamate 121. An N6-succinyllysine modification is found at lysine 144. A divalent metal cation is bound by residues asparagine 154 and aspartate 204. The active-site Proton donor/acceptor is the aspartate 204. Lysine 244 and lysine 253 each carry N6-succinyllysine.

The protein belongs to the SMP-30/CGR1 family. Monomer. It depends on Zn(2+) as a cofactor. The cofactor is Mn(2+). Ca(2+) serves as cofactor. Mg(2+) is required as a cofactor.

The protein localises to the cytoplasm. The enzyme catalyses D-glucono-1,5-lactone + H2O = D-gluconate + H(+). Gluconolactonase with low activity towards other sugar lactones, including gulonolactone and galactonolactone. Can also hydrolyze diisopropyl phosphorofluoridate and phenylacetate (in vitro). Calcium-binding protein. Modulates Ca(2+) signaling, and Ca(2+)-dependent cellular processes and enzyme activities. The chain is Regucalcin (RGN) from Macaca fascicularis (Crab-eating macaque).